We begin with the raw amino-acid sequence, 235 residues long: Large ribosomal subunit protein bL25 (235 aa).

A disordered region spans residues 201-235 (PVAEAKGKGKAAKPAATAKPAAAAAKPAAKPKAKK). A compositionally biased stretch (low complexity) spans 212–228 (AKPAATAKPAAAAAKPA).

Belongs to the bacterial ribosomal protein bL25 family. CTC subfamily. Part of the 50S ribosomal subunit; part of the 5S rRNA/L5/L18/L25 subcomplex. Contacts the 5S rRNA. Binds to the 5S rRNA independently of L5 and L18.

In terms of biological role, this is one of the proteins that binds to the 5S RNA in the ribosome where it forms part of the central protuberance. The protein is Large ribosomal subunit protein bL25 of Verminephrobacter eiseniae (strain EF01-2).